A 481-amino-acid chain; its full sequence is p-aminobenzoyl-glutamate hydrolase subunit B (481 aa).

As to quaternary structure, forms a heterodimer with AbgA. Mn(2+) serves as cofactor.

Functionally, component of the p-aminobenzoyl-glutamate hydrolase multicomponent enzyme system which catalyzes the cleavage of p-aminobenzoyl-glutamate (PABA-GLU) to form p-aminobenzoate (PABA) and glutamate. AbgAB does not degrade dipeptides and the physiological role of abgABT should be clarified. In Escherichia coli (strain K12), this protein is p-aminobenzoyl-glutamate hydrolase subunit B (abgB).